The sequence spans 292 residues: Bifunctional protein FolD (292 aa).

NADP(+)-binding positions include 166–168 (GRS), Ser191, and Ile232.

It belongs to the tetrahydrofolate dehydrogenase/cyclohydrolase family. In terms of assembly, homodimer.

The enzyme catalyses (6R)-5,10-methylene-5,6,7,8-tetrahydrofolate + NADP(+) = (6R)-5,10-methenyltetrahydrofolate + NADPH. It carries out the reaction (6R)-5,10-methenyltetrahydrofolate + H2O = (6R)-10-formyltetrahydrofolate + H(+). It functions in the pathway one-carbon metabolism; tetrahydrofolate interconversion. Its function is as follows. Catalyzes the oxidation of 5,10-methylenetetrahydrofolate to 5,10-methenyltetrahydrofolate and then the hydrolysis of 5,10-methenyltetrahydrofolate to 10-formyltetrahydrofolate. This Wolbachia sp. subsp. Drosophila simulans (strain wRi) protein is Bifunctional protein FolD.